The sequence spans 514 residues: CBL-interacting protein kinase 25 (514 aa).

The Protein kinase domain occupies 21-281; it reads YEFGPLVGEG…IPEIMEMRWF (261 aa). Residues 27 to 35 and lysine 50 each bind ATP; that span reads VGEGNFAKV. Aspartate 149 acts as the Proton acceptor in catalysis. The interval 167–196 is activation loop; it reads DFGLSALADMERREAHLQTVCGTPLFLAPE. The disordered stretch occupies residues 303–340; it reads GLDGEPELYDSDTDTIESSSSSESPTPVAGTPRGMHTS. Residues 304–317 show a composition bias toward acidic residues; that stretch reads LDGEPELYDSDTDT. Positions 318 to 329 are enriched in low complexity; that stretch reads IESSSSSESPTP. An NAF domain is found at 323–395; it reads SSESPTPVAG…PSFDLSGLFE (73 aa). A PPI region spans residues 398 to 427; sequence GERMRFVSGAPVADIIAKLQEIAGMVSFTA.

This sequence belongs to the protein kinase superfamily. CAMK Ser/Thr protein kinase family. SNF1 subfamily. The cofactor is Mn(2+).

The enzyme catalyses L-seryl-[protein] + ATP = O-phospho-L-seryl-[protein] + ADP + H(+). It catalyses the reaction L-threonyl-[protein] + ATP = O-phospho-L-threonyl-[protein] + ADP + H(+). CIPK serine-threonine protein kinases interact with CBL proteins. Binding of a CBL protein to the regulatory NAF domain of CIPK protein lead to the activation of the kinase in a calcium-dependent manner. The protein is CBL-interacting protein kinase 25 (CIPK25) of Oryza sativa subsp. japonica (Rice).